We begin with the raw amino-acid sequence, 476 residues long: Sulfate adenylyltransferase subunit 1 (476 aa).

Positions 25-241 (KSLLRFLTCG…LETVEVQRVV (217 aa)) constitute a tr-type G domain. The tract at residues 34 to 41 (GSVDDGKS) is G1. 34-41 (GSVDDGKS) contacts GTP. Residues 92 to 96 (GITID) form a G2 region. Residues 113–116 (DTPG) form a G3 region. GTP contacts are provided by residues 113-117 (DTPGH) and 168-171 (NKMD). A G4 region spans residues 168–171 (NKMD). Residues 206–208 (SAL) form a G5 region.

It belongs to the TRAFAC class translation factor GTPase superfamily. Classic translation factor GTPase family. CysN/NodQ subfamily. Heterodimer composed of CysD, the smaller subunit, and CysN.

It carries out the reaction sulfate + ATP + H(+) = adenosine 5'-phosphosulfate + diphosphate. The protein operates within sulfur metabolism; hydrogen sulfide biosynthesis; sulfite from sulfate: step 1/3. Functionally, with CysD forms the ATP sulfurylase (ATPS) that catalyzes the adenylation of sulfate producing adenosine 5'-phosphosulfate (APS) and diphosphate, the first enzymatic step in sulfur assimilation pathway. APS synthesis involves the formation of a high-energy phosphoric-sulfuric acid anhydride bond driven by GTP hydrolysis by CysN coupled to ATP hydrolysis by CysD. The protein is Sulfate adenylyltransferase subunit 1 of Erwinia tasmaniensis (strain DSM 17950 / CFBP 7177 / CIP 109463 / NCPPB 4357 / Et1/99).